The following is an 869-amino-acid chain: Protein translocase subunit SecA (869 aa).

ATP is bound by residues Gln85, Gly103–Thr107, and Asp508.

Belongs to the SecA family. In terms of assembly, monomer and homodimer. Part of the essential Sec protein translocation apparatus which comprises SecA, SecYEG and auxiliary proteins SecDF. Other proteins may also be involved.

It is found in the cell membrane. The protein resides in the cytoplasm. The catalysed reaction is ATP + H2O + cellular proteinSide 1 = ADP + phosphate + cellular proteinSide 2.. Part of the Sec protein translocase complex. Interacts with the SecYEG preprotein conducting channel. Has a central role in coupling the hydrolysis of ATP to the transfer of proteins into and across the cell membrane, serving as an ATP-driven molecular motor driving the stepwise translocation of polypeptide chains across the membrane. The chain is Protein translocase subunit SecA from Deinococcus geothermalis (strain DSM 11300 / CIP 105573 / AG-3a).